The chain runs to 628 residues: tRNA(Thr) (cytosine(32)-N(3))-methyltransferase (628 aa).

The segment covering 1-18 (MGVADLIKKFESISKEEG) has biased composition (basic and acidic residues). Disordered stretches follow at residues 1–106 (MGVA…GENA), 124–269 (AEVL…VNDL), and 302–331 (NIAH…TEGS). Polar residues predominate over residues 22 to 31 (VDTNSSSKPL). The segment covering 32 to 42 (KSNDETKELHQ) has biased composition (basic and acidic residues). The segment covering 53-62 (DVNEEFENEP) has biased composition (acidic residues). The residue at position 93 (Ser-93) is a Phosphoserine. Residues 132 to 146 (EESDAIQEGVAEETE) are compositionally biased toward acidic residues. The residue at position 150 (Thr-150) is a Phosphothreonine. Over residues 173–186 (PAEEYSQSEEDADI) the composition is skewed to acidic residues. The span at 196–207 (NAENASQQANDG) shows a compositional bias: polar residues. A compositionally biased stretch (basic residues) spans 215-230 (KNKKKKNKKKNKKKRN). The span at 231-240 (GNVNTNANVD) shows a compositional bias: polar residues. Residues Ser-321 and Ser-326 each carry the phosphoserine modification. A Phosphothreonine modification is found at Thr-347. S-adenosyl-L-methionine-binding residues include Trp-399, Tyr-403, Gly-441, Asp-466, Asp-492, Leu-493, and Ile-515.

The protein belongs to the methyltransferase superfamily. METL family. As to quaternary structure, interacts with SES1.

The protein localises to the cytoplasm. The protein resides in the cytoskeleton. It carries out the reaction cytidine(32) in tRNA(Thr) + S-adenosyl-L-methionine = N(3)-methylcytidine(32) in tRNA(Thr) + S-adenosyl-L-homocysteine + H(+). The enzyme catalyses cytidine(32) in tRNA(Ser) + S-adenosyl-L-methionine = N(3)-methylcytidine(32) in tRNA(Ser) + S-adenosyl-L-homocysteine + H(+). Functionally, S-adenosyl-L-methionine-dependent methyltransferase that mediates N(3)-methylcytidine modification of residue 32 of the tRNA anticodon loop of tRNA(Thr) and tRNA(Ser). N(3)-methylcytidine methylation of tRNA(Thr) requires the N6-threonylcarbamoylation of tRNA (t6A37) by the EKC/KEOPS complex as prerequisite. N(3)-methylcytidine methylation of tRNA(Ser) requires the formation of N(6)-dimethylallyladenosine(37) (i6A37) by MOD5 as prerequisite. Methylation of tRNA(Ser) is also stimulated by SES1. Binds F-actin and shows weak F-actin cross-linking activity. The polypeptide is tRNA(Thr) (cytosine(32)-N(3))-methyltransferase (ABP140) (Saccharomyces cerevisiae (strain ATCC 204508 / S288c) (Baker's yeast)).